Here is a 263-residue protein sequence, read N- to C-terminus: Putative S-adenosyl-L-methionine-dependent methyltransferase Mjls_0079 (263 aa).

S-adenosyl-L-methionine is bound by residues Asp121 and 150 to 151; that span reads ES.

Belongs to the UPF0677 family.

Its function is as follows. Exhibits S-adenosyl-L-methionine-dependent methyltransferase activity. The sequence is that of Putative S-adenosyl-L-methionine-dependent methyltransferase Mjls_0079 from Mycobacterium sp. (strain JLS).